A 345-amino-acid polypeptide reads, in one-letter code: Ananain (345 aa).

A signal peptide spans 1 to 24 (MTSKVQLVFLFLFLCVMWASPSAA). Residues 25–122 (SCDEPSDPMM…VSFDDVDISS (98 aa)) constitute a propeptide, activation peptide. Cystine bridges form between Cys-144-Cys-184, Cys-178-Cys-217, and Cys-273-Cys-325. Cys-147 is an active-site residue. Cys-147 serves as a coordination point for E64. Residues His-279 and Asn-300 contribute to the active site.

As to expression, stem (at protein level).

It carries out the reaction Hydrolysis of proteins with broad specificity for peptide bonds. Best reported small molecule substrate Bz-Phe-Val-Arg-|-NHMec, but broader specificity than fruit bromelain.. Strongly inhibited by chicken egg-white cystatin. Inhibited by iodoacetamide and the active-site-directed inhibitor E64 (L-trans-epoxysuccinyl-leucylamide-(4-guanido)-butane). Functionally, cysteine protease. Displays a high level of diversity in substrate specificity at the P1-P1' cleavage site. A hydrophilic P1 residue is preferred, with Gln or Arg strongly preferred. Favors an Ile/Leu residue at the P2 position of substrates, with an overall higher preference for Leu. The optimal tripeptide for cleavage is Pro-Leu-Gln, with cleavage occurring after the Gln residue. Another optimal tripeptide is Val-Leu-Arg, which may imply that a hydrophobic residue at the P3 position of substrates is preferred. The polypeptide is Ananain (Ananas comosus (Pineapple)).